Here is a 426-residue protein sequence, read N- to C-terminus: MYVLKNGQVLNASGELENKDVLIQNGKVNLIADSIEVTSGEEFDATGKLIAPGFIDVHVHLREPGGEHKETILTGTQAAARGGYTTICSMPNTKPVPDSKEVMESLQAKIKETAKVRVLPYASITTSLGTDELVDFEALKEAGAFAFTDDGVGVQLAGTMYEAMKRAAALDMAIVAHCEDNSLIYGGVVHDGIFAEKEGLKGIPNIAESVQIARDVLLAEAAGCHYHVCHISTKESVRVVRDAKRAGIRVTAEVSPHHLILDEEAIPGNDGNWKMNPPLRSKEDRAALLEGLLDGTIDFIATDHAPHAAEEKNVPMEQAAFGIVGLETAFPLLYTHFVKTKEWTLKQLIDWMTVKPAECFKLPYGKLEEGSVADIVVLDLEKEANIDPATFYSKGKNTPFVGETCIGWPVATFSEGTLVYNEGEIK.

2 residues coordinate Zn(2+): His-58 and His-60. Substrate is bound by residues 60 to 62 (HLR) and Asn-92. 3 residues coordinate Zn(2+): Asp-150, His-177, and His-230. Substrate is bound at residue Asn-276. Asp-303 contributes to the Zn(2+) binding site. Residue Asp-303 is part of the active site. Residues His-307 and 321–322 (FG) contribute to the substrate site.

This sequence belongs to the metallo-dependent hydrolases superfamily. DHOase family. Class I DHOase subfamily. Zn(2+) serves as cofactor.

The catalysed reaction is (S)-dihydroorotate + H2O = N-carbamoyl-L-aspartate + H(+). Its pathway is pyrimidine metabolism; UMP biosynthesis via de novo pathway; (S)-dihydroorotate from bicarbonate: step 3/3. Catalyzes the reversible cyclization of carbamoyl aspartate to dihydroorotate. The protein is Dihydroorotase of Listeria monocytogenes serotype 4b (strain CLIP80459).